We begin with the raw amino-acid sequence, 128 residues long: Large ribosomal subunit protein bL17 (128 aa).

It belongs to the bacterial ribosomal protein bL17 family. As to quaternary structure, part of the 50S ribosomal subunit. Contacts protein L32.

This is Large ribosomal subunit protein bL17 from Streptococcus equi subsp. equi (strain 4047).